We begin with the raw amino-acid sequence, 125 residues long: NADPH-dependent 7-cyano-7-deazaguanine reductase (125 aa).

The active-site Thioimide intermediate is the cysteine 41. Catalysis depends on aspartate 48, which acts as the Proton donor. Substrate-binding positions include 63–65 (IEL) and 82–83 (HE).

Belongs to the GTP cyclohydrolase I family. QueF type 1 subfamily.

It localises to the cytoplasm. It carries out the reaction 7-aminomethyl-7-carbaguanine + 2 NADP(+) = 7-cyano-7-deazaguanine + 2 NADPH + 3 H(+). It functions in the pathway tRNA modification; tRNA-queuosine biosynthesis. Functionally, catalyzes the NADPH-dependent reduction of 7-cyano-7-deazaguanine (preQ0) to 7-aminomethyl-7-deazaguanine (preQ1). The polypeptide is NADPH-dependent 7-cyano-7-deazaguanine reductase (Sulfurovum sp. (strain NBC37-1)).